An 86-amino-acid polypeptide reads, in one-letter code: Large ribosomal subunit protein bL28 (86 aa).

This sequence belongs to the bacterial ribosomal protein bL28 family.

This is Large ribosomal subunit protein bL28 from Bacteroides thetaiotaomicron (strain ATCC 29148 / DSM 2079 / JCM 5827 / CCUG 10774 / NCTC 10582 / VPI-5482 / E50).